The following is a 908-amino-acid chain: 26S proteasome non-ATPase regulatory subunit 2 (908 aa).

N-acetylmethionine is present on methionine 1. Positions 1–51 (MEEGGRDKTPVQSQQPSATTPSGADEKSSGKERRDAGEKDKEQELSEEDKQ) are disordered. 2 positions are modified to phosphothreonine: threonine 9 and threonine 20. Over residues 10–22 (PVQSQQPSATTPS) the composition is skewed to polar residues. The span at 24–51 (ADEKSSGKERRDAGEKDKEQELSEEDKQ) shows a compositional bias: basic and acidic residues. Residues serine 29 and serine 147 each carry the phosphoserine modification. Tyrosine 194 carries the phosphotyrosine modification. A phosphoserine mark is found at serine 361 and serine 363. 5 PC repeats span residues 409–442 (SAAA…YIKS), 443–479 (GALL…TMRL), 480–514 (GSIF…SMEV), 517–551 (VTAL…TELK), and 560–589 (LGLG…PFRS). N6-acetyllysine is present on lysine 551. Basic and acidic residues predominate over residues 623 to 643 (KEKEEDKDKKEKKDKDKKEAP). The disordered stretch occupies residues 623–645 (KEKEEDKDKKEKKDKDKKEAPAD). PC repeat units lie at residues 692 to 723 (LALA…EVSY) and 742 to 757 (AAML…KDPN). Residues 708-903 (DTLSKFSHDA…LEGFVILRKN (196 aa)) form a required for interaction with UBLCP1 region.

This sequence belongs to the proteasome subunit S2 family. As to quaternary structure, component of the 19S proteasome regulatory particle complex. The 26S proteasome consists of a 20S core particle (CP) and two 19S regulatory subunits (RP). The regulatory particle is made of a lid composed of 9 subunits, a base containing 6 ATPases and few additional components including PSMD2. Interacts with RPGRIP1L. Interacts with CRY1 in a KDM8-dependent manner. Interacts (via C-terminus) with phosphatase UBLCP1 (via ubiquitin-like domain); the interaction recruits UBLCP1 to the 19S regulatory particle where it dephosphorylates 19S subunit PSMC2/RPT1 which impairs PSMC2 ATPase activity and disrupts 26S proteasome assembly.

Component of the 26S proteasome, a multiprotein complex involved in the ATP-dependent degradation of ubiquitinated proteins. This complex plays a key role in the maintenance of protein homeostasis by removing misfolded or damaged proteins, which could impair cellular functions, and by removing proteins whose functions are no longer required. Therefore, the proteasome participates in numerous cellular processes, including cell cycle progression, apoptosis, or DNA damage repair. Its function is as follows. Binds to the intracellular domain of tumor necrosis factor type 1 receptor. The binding domain of TRAP1 and TRAP2 resides outside the death domain of TNFR1. The sequence is that of 26S proteasome non-ATPase regulatory subunit 2 (Psmd2) from Mus musculus (Mouse).